We begin with the raw amino-acid sequence, 337 residues long: Holliday junction branch migration complex subunit RuvB (337 aa).

The interval 1 to 182 (MSEEKSVLRD…FGAVFRLSYY (182 aa)) is large ATPase domain (RuvB-L). ATP is bound by residues leucine 21, arginine 22, glycine 63, lysine 66, threonine 67, threonine 68, 129 to 131 (EDY), arginine 172, tyrosine 182, and arginine 219. Threonine 67 contacts Mg(2+). The interval 183–253 (KLEEIKQIVR…ITQLALTKLG (71 aa)) is small ATPAse domain (RuvB-S). Residues 256 to 337 (HKGLDASDYL…VKYYKGLLDN (82 aa)) are head domain (RuvB-H). The DNA site is built by arginine 311 and arginine 316.

This sequence belongs to the RuvB family. In terms of assembly, homohexamer. Forms an RuvA(8)-RuvB(12)-Holliday junction (HJ) complex. HJ DNA is sandwiched between 2 RuvA tetramers; dsDNA enters through RuvA and exits via RuvB. An RuvB hexamer assembles on each DNA strand where it exits the tetramer. Each RuvB hexamer is contacted by two RuvA subunits (via domain III) on 2 adjacent RuvB subunits; this complex drives branch migration. In the full resolvosome a probable DNA-RuvA(4)-RuvB(12)-RuvC(2) complex forms which resolves the HJ.

It is found in the cytoplasm. It carries out the reaction ATP + H2O = ADP + phosphate + H(+). The RuvA-RuvB-RuvC complex processes Holliday junction (HJ) DNA during genetic recombination and DNA repair, while the RuvA-RuvB complex plays an important role in the rescue of blocked DNA replication forks via replication fork reversal (RFR). RuvA specifically binds to HJ cruciform DNA, conferring on it an open structure. The RuvB hexamer acts as an ATP-dependent pump, pulling dsDNA into and through the RuvAB complex. RuvB forms 2 homohexamers on either side of HJ DNA bound by 1 or 2 RuvA tetramers; 4 subunits per hexamer contact DNA at a time. Coordinated motions by a converter formed by DNA-disengaged RuvB subunits stimulates ATP hydrolysis and nucleotide exchange. Immobilization of the converter enables RuvB to convert the ATP-contained energy into a lever motion, pulling 2 nucleotides of DNA out of the RuvA tetramer per ATP hydrolyzed, thus driving DNA branch migration. The RuvB motors rotate together with the DNA substrate, which together with the progressing nucleotide cycle form the mechanistic basis for DNA recombination by continuous HJ branch migration. Branch migration allows RuvC to scan DNA until it finds its consensus sequence, where it cleaves and resolves cruciform DNA. The chain is Holliday junction branch migration complex subunit RuvB from Acholeplasma laidlawii (strain PG-8A).